Here is a 223-residue protein sequence, read N- to C-terminus: Pyridoxine/pyridoxamine 5'-phosphate oxidase (223 aa).

Substrate-binding positions include 13–16 (RKNY) and lysine 73. FMN contacts are provided by residues 68 to 73 (RIVLLK), 83 to 84 (YT), lysine 90, and glutamine 112. Residues tyrosine 130, arginine 134, and serine 138 each contribute to the substrate site. FMN contacts are provided by residues 147–148 (QS) and tryptophan 193. Position 199–201 (199–201 (RLH)) interacts with substrate. Arginine 203 contacts FMN.

Belongs to the pyridoxamine 5'-phosphate oxidase family. In terms of assembly, homodimer. Requires FMN as cofactor.

The catalysed reaction is pyridoxamine 5'-phosphate + O2 + H2O = pyridoxal 5'-phosphate + H2O2 + NH4(+). It catalyses the reaction pyridoxine 5'-phosphate + O2 = pyridoxal 5'-phosphate + H2O2. The protein operates within cofactor metabolism; pyridoxal 5'-phosphate salvage; pyridoxal 5'-phosphate from pyridoxamine 5'-phosphate: step 1/1. It participates in cofactor metabolism; pyridoxal 5'-phosphate salvage; pyridoxal 5'-phosphate from pyridoxine 5'-phosphate: step 1/1. Catalyzes the oxidation of either pyridoxine 5'-phosphate (PNP) or pyridoxamine 5'-phosphate (PMP) into pyridoxal 5'-phosphate (PLP). The chain is Pyridoxine/pyridoxamine 5'-phosphate oxidase from Rhodopirellula baltica (strain DSM 10527 / NCIMB 13988 / SH1).